A 554-amino-acid chain; its full sequence is Dihydroxy-acid dehydratase (554 aa).

Asp-78 serves as a coordination point for Mg(2+). Cys-119 contributes to the [2Fe-2S] cluster binding site. Residues Asp-120 and Lys-121 each contribute to the Mg(2+) site. N6-carboxylysine is present on Lys-121. A [2Fe-2S] cluster-binding site is contributed by Cys-191. Glu-442 is a binding site for Mg(2+). The active-site Proton acceptor is Ser-468.

The protein belongs to the IlvD/Edd family. As to quaternary structure, homodimer. It depends on [2Fe-2S] cluster as a cofactor. Mg(2+) is required as a cofactor.

The enzyme catalyses (2R)-2,3-dihydroxy-3-methylbutanoate = 3-methyl-2-oxobutanoate + H2O. The catalysed reaction is (2R,3R)-2,3-dihydroxy-3-methylpentanoate = (S)-3-methyl-2-oxopentanoate + H2O. It participates in amino-acid biosynthesis; L-isoleucine biosynthesis; L-isoleucine from 2-oxobutanoate: step 3/4. It functions in the pathway amino-acid biosynthesis; L-valine biosynthesis; L-valine from pyruvate: step 3/4. Functionally, functions in the biosynthesis of branched-chain amino acids. Catalyzes the dehydration of (2R,3R)-2,3-dihydroxy-3-methylpentanoate (2,3-dihydroxy-3-methylvalerate) into 2-oxo-3-methylpentanoate (2-oxo-3-methylvalerate) and of (2R)-2,3-dihydroxy-3-methylbutanoate (2,3-dihydroxyisovalerate) into 2-oxo-3-methylbutanoate (2-oxoisovalerate), the penultimate precursor to L-isoleucine and L-valine, respectively. The chain is Dihydroxy-acid dehydratase from Acetivibrio thermocellus (strain ATCC 27405 / DSM 1237 / JCM 9322 / NBRC 103400 / NCIMB 10682 / NRRL B-4536 / VPI 7372) (Clostridium thermocellum).